The primary structure comprises 395 residues: Acetate kinase (395 aa).

Residue asparagine 8 participates in Mg(2+) binding. Lysine 15 contacts ATP. Arginine 90 serves as a coordination point for substrate. Residue aspartate 147 is the Proton donor/acceptor of the active site. ATP-binding positions include 207-211 (HLGNG), 284-286 (DMR), and 330-334 (GIGEN). Glutamate 383 serves as a coordination point for Mg(2+).

Belongs to the acetokinase family. Homodimer. Requires Mg(2+) as cofactor. Mn(2+) is required as a cofactor.

The protein resides in the cytoplasm. The catalysed reaction is acetate + ATP = acetyl phosphate + ADP. It participates in metabolic intermediate biosynthesis; acetyl-CoA biosynthesis; acetyl-CoA from acetate: step 1/2. In terms of biological role, catalyzes the formation of acetyl phosphate from acetate and ATP. Can also catalyze the reverse reaction. This Enterococcus faecalis (strain ATCC 700802 / V583) protein is Acetate kinase.